A 254-amino-acid polypeptide reads, in one-letter code: 5'/3'-nucleotidase SurE (254 aa).

Positions 9, 10, 40, and 93 each coordinate a divalent metal cation.

This sequence belongs to the SurE nucleotidase family. A divalent metal cation serves as cofactor.

Its subcellular location is the cytoplasm. It catalyses the reaction a ribonucleoside 5'-phosphate + H2O = a ribonucleoside + phosphate. It carries out the reaction a ribonucleoside 3'-phosphate + H2O = a ribonucleoside + phosphate. The enzyme catalyses [phosphate](n) + H2O = [phosphate](n-1) + phosphate + H(+). Functionally, nucleotidase with a broad substrate specificity as it can dephosphorylate various ribo- and deoxyribonucleoside 5'-monophosphates and ribonucleoside 3'-monophosphates with highest affinity to 3'-AMP. Also hydrolyzes polyphosphate (exopolyphosphatase activity) with the preference for short-chain-length substrates (P20-25). Might be involved in the regulation of dNTP and NTP pools, and in the turnover of 3'-mononucleotides produced by numerous intracellular RNases (T1, T2, and F) during the degradation of various RNAs. The protein is 5'/3'-nucleotidase SurE of Yersinia pseudotuberculosis serotype O:1b (strain IP 31758).